We begin with the raw amino-acid sequence, 195 residues long: Auxin-responsive protein IAA14 (195 aa).

2 disordered regions span residues 1–61 (MAAE…SPAS) and 85–107 (STAA…NKGG). Positions 10-14 (LRLGL) match the EAR-like (transcriptional repression) motif. Positions 108-191 (GLYVKVSMDG…SCKKLRIMRG (84 aa)) constitute a PB1 domain.

This sequence belongs to the Aux/IAA family. As to quaternary structure, homodimers and heterodimers. Highly expressed in flowers. Expressed in etiolated seedlings.

The protein localises to the nucleus. Functionally, aux/IAA proteins are short-lived transcriptional factors that function as repressors of early auxin response genes at low auxin concentrations. The polypeptide is Auxin-responsive protein IAA14 (IAA14) (Oryza sativa subsp. japonica (Rice)).